The chain runs to 557 residues: Potassium-transporting ATPase potassium-binding subunit (557 aa).

A run of 12 helical transmembrane segments spans residues 5 to 25, 63 to 83, 132 to 152, 170 to 190, 253 to 273, 283 to 303, 329 to 349, 356 to 376, 379 to 399, 416 to 436, 484 to 504, and 526 to 546; these read GFLL…PLGS, LCAI…MLLG, GLTV…FALI, LLRI…LFFI, FVQM…FGEV, LLWA…WAEV, VLVS…AVIA, ALGG…FGGV, GLYG…LMIG, LTAL…ALAM, LLAF…MAIA, and LFVG…FIPA.

This sequence belongs to the KdpA family. As to quaternary structure, the system is composed of three essential subunits: KdpA, KdpB and KdpC.

It is found in the cell inner membrane. Part of the high-affinity ATP-driven potassium transport (or Kdp) system, which catalyzes the hydrolysis of ATP coupled with the electrogenic transport of potassium into the cytoplasm. This subunit binds the periplasmic potassium ions and delivers the ions to the membrane domain of KdpB through an intramembrane tunnel. The protein is Potassium-transporting ATPase potassium-binding subunit of Escherichia coli O139:H28 (strain E24377A / ETEC).